We begin with the raw amino-acid sequence, 326 residues long: Beta-ketoacyl-[acyl-carrier-protein] synthase III (326 aa).

Catalysis depends on residues Cys-120 and His-253. Residues 254–258 (QANIR) form an ACP-binding region. Asn-283 is a catalytic residue.

Belongs to the thiolase-like superfamily. FabH family. Homodimer.

Its subcellular location is the cytoplasm. It carries out the reaction malonyl-[ACP] + acetyl-CoA + H(+) = 3-oxobutanoyl-[ACP] + CO2 + CoA. Its pathway is lipid metabolism; fatty acid biosynthesis. Functionally, catalyzes the condensation reaction of fatty acid synthesis by the addition to an acyl acceptor of two carbons from malonyl-ACP. Catalyzes the first condensation reaction which initiates fatty acid synthesis and may therefore play a role in governing the total rate of fatty acid production. Possesses both acetoacetyl-ACP synthase and acetyl transacylase activities. Its substrate specificity determines the biosynthesis of branched-chain and/or straight-chain of fatty acids. The polypeptide is Beta-ketoacyl-[acyl-carrier-protein] synthase III (Ralstonia pickettii (strain 12J)).